The following is a 447-amino-acid chain: MKDLISIIDVKDHVGETVKIGAWVADKSGKGKLQFLQLRDGTAFFQAVVFKPNMIEKFGEEEGTAKFDEIKHLSQETSVYVTGVVKEDSRSKFGYELDVTELEVIGHSHDYPITPKEHGVEFLLDNRHLWLRSKRQMAMMQVRNAIIYASYDFFAKNGFIKFDSPILSGNAAENTTELFETDYFGNPAFLSQSGQLYLEAGAMALGRVFDFGPVFRAEKSKTRRHLTEFWMMDAEYPFVTHDESLDIQEAYVKALIQGVLDNAAYALETLERDTSMLQKYIDTPFKRVSYDDAIDLLQAHENDEDTDYEHVEHGDDFGSPHETWISNYYGVPTFIVNYPASFKAFYMKPVPGNPERVLCADLLAPEGYGEIIGGSERETDYDLLLKKIADFGLDPKDYDWYLELRKFGSVPHAGFGLGLERMVTFVAGTEHIREAIPFPRMINRIQP.

This sequence belongs to the class-II aminoacyl-tRNA synthetase family. As to quaternary structure, homodimer.

The protein localises to the cytoplasm. The enzyme catalyses tRNA(Asn) + L-asparagine + ATP = L-asparaginyl-tRNA(Asn) + AMP + diphosphate + H(+). The sequence is that of Asparagine--tRNA ligase from Lactococcus lactis subsp. cremoris (strain MG1363).